Reading from the N-terminus, the 709-residue chain is Threonine--tRNA ligase, mitochondrial 1 (709 aa).

A mitochondrion-targeting transit peptide spans 1 to 21; sequence MLLRLTARSIRRFTTSSSSLP. Residues 73–135 form the TGS domain; the sequence is DPIKVTLPDG…EGDCKLELFK (63 aa). Zn(2+) contacts are provided by Cys-407, His-458, and His-584.

Belongs to the class-II aminoacyl-tRNA synthetase family.

It localises to the mitochondrion. The protein resides in the cytoplasm. It is found in the cytosol. It catalyses the reaction tRNA(Thr) + L-threonine + ATP = L-threonyl-tRNA(Thr) + AMP + diphosphate + H(+). The polypeptide is Threonine--tRNA ligase, mitochondrial 1 (Arabidopsis thaliana (Mouse-ear cress)).